Reading from the N-terminus, the 1392-residue chain is DNA-directed RNA polymerase subunit beta'' (1392 aa).

Residues cysteine 224, cysteine 295, cysteine 302, and cysteine 305 each contribute to the Zn(2+) site.

This sequence belongs to the RNA polymerase beta' chain family. RpoC2 subfamily. In terms of assembly, in plastids the minimal PEP RNA polymerase catalytic core is composed of four subunits: alpha, beta, beta', and beta''. When a (nuclear-encoded) sigma factor is associated with the core the holoenzyme is formed, which can initiate transcription. It depends on Zn(2+) as a cofactor.

The protein resides in the plastid. Its subcellular location is the chloroplast. The enzyme catalyses RNA(n) + a ribonucleoside 5'-triphosphate = RNA(n+1) + diphosphate. Functionally, DNA-dependent RNA polymerase catalyzes the transcription of DNA into RNA using the four ribonucleoside triphosphates as substrates. This chain is DNA-directed RNA polymerase subunit beta'', found in Nicotiana tomentosiformis (Tobacco).